Reading from the N-terminus, the 402-residue chain is Ubiquitin-like modifier-activating enzyme 5 (402 aa).

5 residues coordinate ATP: Gly-81, Asp-102, Lys-125, Asn-148, and Asn-182. Zn(2+) is bound by residues Cys-224 and Cys-227. Cys-248 functions as the Glycyl thioester intermediate in the catalytic mechanism. Zn(2+) contacts are provided by Cys-301 and Cys-306. The segment at 369 to 402 is disordered; the sequence is EAPEKSSETSEETVTTAPPDDASLEDLMAQMKSM.

It belongs to the ubiquitin-activating E1 family. UBA5 subfamily.

Functionally, E1-like enzyme which activates UFM1. The chain is Ubiquitin-like modifier-activating enzyme 5 from Drosophila erecta (Fruit fly).